A 373-amino-acid chain; its full sequence is tRNA-specific 2-thiouridylase MnmA (373 aa).

Residues 12–19 and Met-38 contribute to the ATP site; that span reads GMSGGVDS. Positions 98–100 are interaction with target base in tRNA; it reads NPD. Cys-103 acts as the Nucleophile in catalysis. Cys-103 and Cys-200 are oxidised to a cystine. Gly-127 lines the ATP pocket. An interaction with tRNA region spans residues 150–152; the sequence is KDQ. Cys-200 (cysteine persulfide intermediate) is an active-site residue. Positions 312–313 are interaction with tRNA; it reads RY.

This sequence belongs to the MnmA/TRMU family.

Its subcellular location is the cytoplasm. The catalysed reaction is S-sulfanyl-L-cysteinyl-[protein] + uridine(34) in tRNA + AH2 + ATP = 2-thiouridine(34) in tRNA + L-cysteinyl-[protein] + A + AMP + diphosphate + H(+). Its function is as follows. Catalyzes the 2-thiolation of uridine at the wobble position (U34) of tRNA, leading to the formation of s(2)U34. This Streptococcus pneumoniae (strain P1031) protein is tRNA-specific 2-thiouridylase MnmA.